We begin with the raw amino-acid sequence, 935 residues long: Phosphoenolpyruvate carboxylase (935 aa).

Catalysis depends on residues histidine 161 and lysine 593.

Belongs to the PEPCase type 1 family. The cofactor is Mg(2+).

It catalyses the reaction oxaloacetate + phosphate = phosphoenolpyruvate + hydrogencarbonate. Forms oxaloacetate, a four-carbon dicarboxylic acid source for the tricarboxylic acid cycle. The chain is Phosphoenolpyruvate carboxylase from Mycobacterium avium (strain 104).